The following is a 320-amino-acid chain: HPr kinase/phosphorylase (320 aa).

Catalysis depends on residues His141 and Lys162. Residue 156–163 participates in ATP binding; that stretch reads GHSGLGKS. Residue Ser163 coordinates Mg(2+). Residue Asp180 is the Proton acceptor; for phosphorylation activity. Proton donor; for dephosphorylation activity of the active site. Residues 204–213 form an important for the catalytic mechanism of both phosphorylation and dephosphorylation region; the sequence is LEVRGLGILN. Glu205 contacts Mg(2+). Arg248 is an active-site residue. An important for the catalytic mechanism of dephosphorylation region spans residues 269-274; it reads PVAVGR.

It belongs to the HPrK/P family. In terms of assembly, homohexamer. It depends on Mg(2+) as a cofactor.

The enzyme catalyses [HPr protein]-L-serine + ATP = [HPr protein]-O-phospho-L-serine + ADP + H(+). It catalyses the reaction [HPr protein]-O-phospho-L-serine + phosphate + H(+) = [HPr protein]-L-serine + diphosphate. Its function is as follows. Catalyzes the ATP- as well as the pyrophosphate-dependent phosphorylation of a specific serine residue in HPr, a phosphocarrier protein of the phosphoenolpyruvate-dependent sugar phosphotransferase system (PTS). HprK/P also catalyzes the pyrophosphate-producing, inorganic phosphate-dependent dephosphorylation (phosphorolysis) of seryl-phosphorylated HPr (P-Ser-HPr). This Neisseria meningitidis serogroup C / serotype 2a (strain ATCC 700532 / DSM 15464 / FAM18) protein is HPr kinase/phosphorylase.